Reading from the N-terminus, the 461-residue chain is Asparagine--tRNA ligase (461 aa).

It belongs to the class-II aminoacyl-tRNA synthetase family. Homodimer.

Its subcellular location is the cytoplasm. It catalyses the reaction tRNA(Asn) + L-asparagine + ATP = L-asparaginyl-tRNA(Asn) + AMP + diphosphate + H(+). This is Asparagine--tRNA ligase from Nitratidesulfovibrio vulgaris (strain DP4) (Desulfovibrio vulgaris).